A 405-amino-acid polypeptide reads, in one-letter code: 8-amino-7-oxononanoate synthase 2 (405 aa).

Position 20 (arginine 20) interacts with substrate. Position 116–117 (116–117) interacts with pyridoxal 5'-phosphate; the sequence is GY. Residue histidine 141 coordinates substrate. Pyridoxal 5'-phosphate is bound by residues serine 187, histidine 215, and threonine 243. Lysine 246 is subject to N6-(pyridoxal phosphate)lysine. Residue threonine 369 participates in substrate binding.

This sequence belongs to the class-II pyridoxal-phosphate-dependent aminotransferase family. BioF subfamily. As to quaternary structure, homodimer. Pyridoxal 5'-phosphate is required as a cofactor.

The enzyme catalyses 6-carboxyhexanoyl-[ACP] + L-alanine + H(+) = (8S)-8-amino-7-oxononanoate + holo-[ACP] + CO2. Its pathway is cofactor biosynthesis; biotin biosynthesis. Its function is as follows. Catalyzes the decarboxylative condensation of pimeloyl-[acyl-carrier protein] and L-alanine to produce 8-amino-7-oxononanoate (AON), [acyl-carrier protein], and carbon dioxide. In Polaromonas sp. (strain JS666 / ATCC BAA-500), this protein is 8-amino-7-oxononanoate synthase 2.